The chain runs to 339 residues: Very-long-chain 3-oxoacyl-CoA reductase (339 aa).

A helical transmembrane segment spans residues 19–39 (VALFLLSIGGLFTACKLFSFC). Residues L64, K105, D119, D127, N146, Y213, K217, V246, and S248 each coordinate NADP(+). The active-site Proton donor is Y213. K217 acts as the Lowers pKa of active site Tyr in catalysis.

The protein belongs to the short-chain dehydrogenases/reductases (SDR) family.

It is found in the endoplasmic reticulum membrane. The enzyme catalyses a very-long-chain (3R)-3-hydroxyacyl-CoA + NADP(+) = a very-long-chain 3-oxoacyl-CoA + NADPH + H(+). Its pathway is lipid metabolism; fatty acid biosynthesis. Functionally, component of the microsomal membrane bound fatty acid elongation system, which produces the 26-carbon very long-chain fatty acids (VLCFA) from palmitate. Catalyzes the reduction of the 3-ketoacyl-CoA intermediate that is formed in each cycle of fatty acid elongation. VLCFAs serve as precursors for ceramide and sphingolipids. The sequence is that of Very-long-chain 3-oxoacyl-CoA reductase from Ajellomyces capsulatus (strain NAm1 / WU24) (Darling's disease fungus).